The primary structure comprises 1028 residues: RNA cytidine acetyltransferase 2 (1028 aa).

ATP contacts are provided by residues 286-295 and R458; that span reads GRGKSAALGL. An N-acetyltransferase domain is found at 546–729; sequence VLLGPVDESQ…FAPFYVSQIP (184 aa). Acetyl-CoA contacts are provided by residues 617 to 619, 624 to 630, and K717; these read IAV and MKMGYGS. The tract at residues 982-1028 is disordered; the sequence is SGIISVKSTKSENENGFDKSTKKRSSDKRSSSSSKSKSSKKRKSLKE. The span at 990 to 1001 shows a compositional bias: basic and acidic residues; that stretch reads TKSENENGFDKS. Over residues 1018 to 1028 the composition is skewed to basic residues; the sequence is KSSKKRKSLKE.

The protein belongs to the RNA cytidine acetyltransferase family. NAT10 subfamily.

It localises to the nucleus. The protein resides in the nucleolus. It catalyses the reaction a cytidine in 18S rRNA + acetyl-CoA + ATP + H2O = an N(4)-acetylcytidine in 18S rRNA + ADP + phosphate + CoA + H(+). The catalysed reaction is a cytidine in tRNA + acetyl-CoA + ATP + H2O = an N(4)-acetylcytidine in tRNA + ADP + phosphate + CoA + H(+). RNA cytidine acetyltransferase with specificity toward both 18S rRNA and tRNAs. Catalyzes the formation of N(4)-acetylcytidine (ac4C) in 18S rRNA. Required for early nucleolar cleavages of precursor rRNA at sites A0, A1 and A2 during 18S rRNA synthesis. Catalyzes the formation of ac4C in serine and leucine tRNAs. Requires a tRNA-binding adapter protein for full tRNA acetyltransferase activity but not for 18S rRNA acetylation. The protein is RNA cytidine acetyltransferase 2 of Arabidopsis thaliana (Mouse-ear cress).